The primary structure comprises 250 residues: Hydroxyacylglutathione hydrolase (250 aa).

Zn(2+) is bound by residues histidine 53, histidine 55, aspartate 57, histidine 58, histidine 110, aspartate 127, and histidine 165.

It belongs to the metallo-beta-lactamase superfamily. Glyoxalase II family. As to quaternary structure, monomer. It depends on Zn(2+) as a cofactor.

The catalysed reaction is an S-(2-hydroxyacyl)glutathione + H2O = a 2-hydroxy carboxylate + glutathione + H(+). It functions in the pathway secondary metabolite metabolism; methylglyoxal degradation; (R)-lactate from methylglyoxal: step 2/2. Functionally, thiolesterase that catalyzes the hydrolysis of S-D-lactoyl-glutathione to form glutathione and D-lactic acid. The polypeptide is Hydroxyacylglutathione hydrolase (Photorhabdus laumondii subsp. laumondii (strain DSM 15139 / CIP 105565 / TT01) (Photorhabdus luminescens subsp. laumondii)).